Here is a 716-residue protein sequence, read N- to C-terminus: uncharacterized protein (716 aa).

Disordered regions lie at residues 84–103 and 153–189; these read SPSIIGVPSETQTSPVERYP and VTDEDSDFEPQTQRPQSIARKRPGVVPSSLHSSSQTQ. Ser97 is subject to Phosphoserine. Residues Lys201, Lys204, Lys237, Lys283, and Lys626 each participate in a glycyl lysine isopeptide (Lys-Gly) (interchain with G-Cter in SUMO2) cross-link.

This is an uncharacterized protein from Homo sapiens (Human).